The chain runs to 352 residues: B1 bradykinin receptor (352 aa).

At 1 to 41 the chain is on the extracellular side; that stretch reads MAAQTLLELQPSNQSQLSALNTTSCDNAREAWDLLYQVLPI. Asparagine 13 and asparagine 21 each carry an N-linked (GlcNAc...) asparagine glycan. A helical transmembrane segment spans residues 42 to 62; it reads FILTICAFGLLGNLFVLSVFL. Residues 63–72 are Cytoplasmic-facing; sequence LLRRRLTVAE. A helical transmembrane segment spans residues 73-93; that stretch reads IYLVNLAASDLVFVLGLPFWA. Topologically, residues 94-110 are extracellular; that stretch reads QNIWNQFNWPFGDLLCR. Cysteine 109 and cysteine 188 are joined by a disulfide. A helical transmembrane segment spans residues 111–131; sequence VVNGVIKANLFISIFLMVAIS. Residues 132–153 lie on the Cytoplasmic side of the membrane; sequence QDRYCVLVHPMASRRRRRRRRA. Residues 154-174 traverse the membrane as a helical segment; it reads RATCMVIWAVGALLSTPTFLL. Residues 175-206 lie on the Extracellular side of the membrane; the sequence is RSVSAVQDLNISACILLLPHQAWHVARIVELN. Asparagine 184 carries N-linked (GlcNAc...) asparagine glycosylation. A helical membrane pass occupies residues 207-227; sequence VLGFLLPLAAIIFFNGHILAS. The Cytoplasmic segment spans residues 228–250; the sequence is LRGQGEVSQTRIGGPKDCKTTVL. A helical membrane pass occupies residues 251 to 271; it reads ILTLVAAFLVCWAPYHCFAFL. Topologically, residues 272 to 294 are extracellular; sequence EFLFQVRAVRGCFWEDFIDLGLQ. Residues 295 to 315 traverse the membrane as a helical segment; the sequence is LANFFAFTNSCLNPVIYVFVG. Residues 316 to 326 are Cytoplasmic-facing; that stretch reads RLFRTKVWELY. Residue cysteine 329 is the site of S-palmitoyl cysteine attachment.

It belongs to the G-protein coupled receptor 1 family. Bradykinin receptor subfamily. BDKRB1 sub-subfamily.

It localises to the cell membrane. Its function is as follows. This is a receptor for bradykinin. Could be a factor in chronic pain and inflammation. In Tupaia minor (Pigmy tree shrew), this protein is B1 bradykinin receptor (BDKRB1).